Reading from the N-terminus, the 834-residue chain is Kinesin-like protein KIF18B (834 aa).

A Kinesin motor domain is found at 9–353 (VVRVVVRVRP…LKYADRAKEI (345 aa)). 111–118 (GATGAGKT) contributes to the ATP binding site. The stretch at 368-404 (ISQYATICQQLQAEVAFLREKLQMYEAGAQALQQQCS) forms a coiled coil. 4 disordered regions span residues 400-508 (QQQC…ADHS), 602-642 (LGAP…NLEM), 655-686 (RGSL…RVCP), and 800-834 (KKPN…TESY). Residues 411 to 432 (SIPQSLSSSSLQPGPSSQSSTL) show a composition bias toward low complexity. Thr431 is subject to Phosphothreonine. The segment covering 462–474 (EQEQCPQDKQCPT) has biased composition (polar residues). Ser484 carries the post-translational modification Phosphoserine. A compositionally biased stretch (basic and acidic residues) spans 611 to 620 (TSDKTFQKPT). The Nuclear localization signal motif lies at 619 to 627 (PTKEKKRKL). 2 positions are modified to phosphoserine: Ser634 and Ser657. A Phosphothreonine modification is found at Thr669. Residue Ser814 is modified to Phosphoserine.

Belongs to the TRAFAC class myosin-kinesin ATPase superfamily. Kinesin family. In terms of assembly, interacts with MAPRE1; this interaction is required for efficient accumulation at microtubule plus ends. Interacts with KIF2C at microtubule tips; this interaction increases the affinity of both partners for microtubule plus ends and is required for robust microtubule depolymerization. KIF2C phosphorylation by AURKA or AURKB strongly reduces KIF18B-binding.

The protein resides in the nucleus. It localises to the cytoplasm. The protein localises to the cytoskeleton. In terms of biological role, in complex with KIF2C, constitutes the major microtubule plus-end depolymerizing activity in mitotic cells. Its major role may be to transport KIF2C and/or MAPRE1 along microtubules. The chain is Kinesin-like protein KIF18B (Kif18b) from Mus musculus (Mouse).